The chain runs to 693 residues: F-box protein MAX2 (693 aa).

An F-box domain is found at 3-50; that stretch reads STTLSDLPDVILSTISSLVSDSRARNSLSLVSHKFLALERSTRSHLTI. LRR repeat units follow at residues 9-34, 49-74, 75-100, 110-135, 141-167, 168-196, 200-225, 232-257, 274-299, 302-327, 332-356, 357-382, 383-409, and 410-436; these read LPDV…SLVS, TIRG…DLSF, LSPW…RLKF, VYTR…KLLR, SQIP…DLSN, FYHW…DLLT, TEGY…RVAC, FEFV…HMVD, DSAV…VLDV, DVKH…KLGQ, CSAT…SIKN, SGDL…EIQG, CENV…RISC, and CKNL…HIDC. The interval 445 to 465 is disordered; sequence EVEGRVETSEADHEEEDDGYE. LRR repeat units lie at residues 480–505, 508–532, 541–565, and 608–637; these read CSTS…SLWI, GEFL…RIKI, RPAE…QLDC, and DRDV…FIHG.

Part of a SCF (SKP1-cullin-F-box) protein ligase complex. Interacts with SKP1A/ASK1. Interacts with CUL1. Interacts with SMXL6, SMXL7 and SMXL8. Interacts with D14. Forms a complex with D14 and SKP1A/ASK1 in presence of strigolactone. As to expression, expressed in the vasculature of growing leaves and roots, rosette axillary bud, flowers, siliques, funiculi and stems.

The protein resides in the nucleus. It functions in the pathway protein modification; protein ubiquitination. Functionally, component of SCF(ASK-cullin-F-box) E3 ubiquitin ligase complexes, which may mediate the ubiquitination and subsequent proteasomal degradation of target proteins. Promotes the senescence. Is necessary for responses to strigolactones and karrikins. Contributes to the selective repression of axillary shoots and moderates the branching by regulating negatively the auxin transport in primary stems, in an AXR1-independent manner. Required for the progression of leaf senescence mediated by methyl jasmonate. Required at each node to suppress axillary bud growth. In Arabidopsis thaliana (Mouse-ear cress), this protein is F-box protein MAX2.